The chain runs to 134 residues: NAD(P)H-quinone oxidoreductase subunit 3 (134 aa).

The next 3 membrane-spanning stretches (helical) occupy residues 20–40 (GYDAFLGFLLVSAAVPILALV), 78–98 (MFALVFVIFDVETVFLYPWAV), and 103–123 (LGLLAFIEALIFIAILLVALA).

The protein belongs to the complex I subunit 3 family. NDH-1 can be composed of about 15 different subunits; different subcomplexes with different compositions have been identified which probably have different functions.

The protein localises to the cellular thylakoid membrane. It catalyses the reaction a plastoquinone + NADH + (n+1) H(+)(in) = a plastoquinol + NAD(+) + n H(+)(out). The enzyme catalyses a plastoquinone + NADPH + (n+1) H(+)(in) = a plastoquinol + NADP(+) + n H(+)(out). In terms of biological role, NDH-1 shuttles electrons from an unknown electron donor, via FMN and iron-sulfur (Fe-S) centers, to quinones in the respiratory and/or the photosynthetic chain. The immediate electron acceptor for the enzyme in this species is believed to be plastoquinone. Couples the redox reaction to proton translocation, and thus conserves the redox energy in a proton gradient. Cyanobacterial NDH-1 also plays a role in inorganic carbon-concentration. The chain is NAD(P)H-quinone oxidoreductase subunit 3 from Prochlorococcus marinus (strain MIT 9303).